The sequence spans 142 residues: Large ribosomal subunit protein uL11 (142 aa).

It belongs to the universal ribosomal protein uL11 family. As to quaternary structure, part of the ribosomal stalk of the 50S ribosomal subunit. Interacts with L10 and the large rRNA to form the base of the stalk. L10 forms an elongated spine to which L12 dimers bind in a sequential fashion forming a multimeric L10(L12)X complex. One or more lysine residues are methylated.

Its function is as follows. Forms part of the ribosomal stalk which helps the ribosome interact with GTP-bound translation factors. This chain is Large ribosomal subunit protein uL11, found in Akkermansia muciniphila (strain ATCC BAA-835 / DSM 22959 / JCM 33894 / BCRC 81048 / CCUG 64013 / CIP 107961 / Muc).